Reading from the N-terminus, the 399-residue chain is Tryptophan synthase beta chain (399 aa).

The residue at position 92 (Lys-92) is an N6-(pyridoxal phosphate)lysine.

This sequence belongs to the TrpB family. As to quaternary structure, tetramer of two alpha and two beta chains. Pyridoxal 5'-phosphate serves as cofactor.

The catalysed reaction is (1S,2R)-1-C-(indol-3-yl)glycerol 3-phosphate + L-serine = D-glyceraldehyde 3-phosphate + L-tryptophan + H2O. The protein operates within amino-acid biosynthesis; L-tryptophan biosynthesis; L-tryptophan from chorismate: step 5/5. Functionally, the beta subunit is responsible for the synthesis of L-tryptophan from indole and L-serine. The protein is Tryptophan synthase beta chain of Exiguobacterium sibiricum (strain DSM 17290 / CCUG 55495 / CIP 109462 / JCM 13490 / 255-15).